The primary structure comprises 388 residues: Pepsin A-4 (388 aa).

An N-terminal signal peptide occupies residues 1–15 (MKWLLLLGLVALSEC). The propeptide at 16-62 (IMYKVPLIRKKSLRRTLSERGLLKDFLKKHNLNPARKYFPQWEAPTL) is activation peptide. The Peptidase A1 domain maps to 76 to 385 (YFGTIGIGTP…DRANNQVGLA (310 aa)). D94 is a catalytic residue. A disulfide bridge links C107 with C112. Position 130 is a phosphoserine (S130). A disulfide bridge links C268 with C272. Residue D277 is part of the active site. Cysteines 311 and 344 form a disulfide.

This sequence belongs to the peptidase A1 family.

It localises to the secreted. The catalysed reaction is Preferential cleavage: hydrophobic, preferably aromatic, residues in P1 and P1' positions. Cleaves 1-Phe-|-Val-2, 4-Gln-|-His-5, 13-Glu-|-Ala-14, 14-Ala-|-Leu-15, 15-Leu-|-Tyr-16, 16-Tyr-|-Leu-17, 23-Gly-|-Phe-24, 24-Phe-|-Phe-25 and 25-Phe-|-Tyr-26 bonds in the B chain of insulin.. In terms of biological role, shows particularly broad specificity; although bonds involving phenylalanine and leucine are preferred, many others are also cleaved to some extent. This chain is Pepsin A-4 (PGA4), found in Homo sapiens (Human).